A 377-amino-acid chain; its full sequence is Putative glutamate--cysteine ligase 2 (377 aa).

It belongs to the glutamate--cysteine ligase type 2 family. YbdK subfamily.

The enzyme catalyses L-cysteine + L-glutamate + ATP = gamma-L-glutamyl-L-cysteine + ADP + phosphate + H(+). ATP-dependent carboxylate-amine ligase which exhibits weak glutamate--cysteine ligase activity. This is Putative glutamate--cysteine ligase 2 from Chromobacterium violaceum (strain ATCC 12472 / DSM 30191 / JCM 1249 / CCUG 213 / NBRC 12614 / NCIMB 9131 / NCTC 9757 / MK).